The primary structure comprises 658 residues: Protein teflon (658 aa).

The segment at 33 to 56 (LYCHFCRDLFTQLPEFLRHLQGAH) adopts a C2H2-type 1 zinc-finger fold. Disordered regions lie at residues 78–127 (EQDD…SEQK) and 151–175 (HINN…SESN). Basic and acidic residues predominate over residues 100-111 (IPAKSEDSRAID). The segment covering 118 to 127 (DNSPVKSEQK) has biased composition (polar residues). A C2H2-type 2; degenerate zinc finger spans residues 608–630 (YFCKCCDDIFTLNEDYTRHLVSQ). Residues 634 to 657 (YQCTKCIKAFKYRGHFEKHLQNVH) form a C2H2-type 3 zinc finger.

The protein belongs to the Teflon family.

It localises to the nucleus. The protein localises to the chromosome. Functionally, specifically required in males for proper segregation of autosomal bivalents at meiosis I. Expression is required in the male germ line prior to spermatocyte stage S4. May have a role as a bridging molecule maintaining adhesion to hold autosome bivalents together via heterochromatic connections. The sequence is that of Protein teflon from Drosophila erecta (Fruit fly).